A 752-amino-acid chain; its full sequence is Photosystem I P700 chlorophyll a apoprotein A1 (752 aa).

Helical transmembrane passes span 73–96 (IFSA…FHGA), 159–182 (LYCT…FHYH), 198–222 (MNHH…HLSL), 294–312 (TAHH…GHMY), 349–372 (WHAQ…HHMY), 388–414 (LSLF…IFMV), 436–458 (AIVS…LYIH), and 533–551 (FMVH…LILV). Residues Cys-575 and Cys-584 each contribute to the [4Fe-4S] cluster site. Helical transmembrane passes span 591–612 (HVFL…HFSW) and 666–688 (LSAY…MFLF). His-677 contributes to the chlorophyll a' binding site. Residues Met-685 and Tyr-693 each coordinate chlorophyll a. A phylloquinone-binding site is contributed by Trp-694. The helical transmembrane segment at 726-746 (AVGVAHYLLGGIGTTWAFFLA) threads the bilayer.

The protein belongs to the PsaA/PsaB family. As to quaternary structure, the PsaA/B heterodimer binds the P700 chlorophyll special pair and subsequent electron acceptors. PSI consists of a core antenna complex that captures photons, and an electron transfer chain that converts photonic excitation into a charge separation. The eukaryotic PSI reaction center is composed of at least 11 subunits. It depends on P700 is a chlorophyll a/chlorophyll a' dimer, A0 is one or more chlorophyll a, A1 is one or both phylloquinones and FX is a shared 4Fe-4S iron-sulfur center. as a cofactor.

The protein resides in the plastid. The protein localises to the chloroplast thylakoid membrane. The enzyme catalyses reduced [plastocyanin] + hnu + oxidized [2Fe-2S]-[ferredoxin] = oxidized [plastocyanin] + reduced [2Fe-2S]-[ferredoxin]. Functionally, psaA and PsaB bind P700, the primary electron donor of photosystem I (PSI), as well as the electron acceptors A0, A1 and FX. PSI is a plastocyanin/cytochrome c6-ferredoxin oxidoreductase, converting photonic excitation into a charge separation, which transfers an electron from the donor P700 chlorophyll pair to the spectroscopically characterized acceptors A0, A1, FX, FA and FB in turn. Oxidized P700 is reduced on the lumenal side of the thylakoid membrane by plastocyanin or cytochrome c6. This Porphyra purpurea (Red seaweed) protein is Photosystem I P700 chlorophyll a apoprotein A1.